The following is an 87-amino-acid chain: HssA/B-like protein 54 (87 aa).

The protein belongs to the hssA/B family.

This is HssA/B-like protein 54 (hssl54) from Dictyostelium discoideum (Social amoeba).